A 312-amino-acid polypeptide reads, in one-letter code: 26S proteasome non-ATPase regulatory subunit 14 (312 aa).

Positions 33–168 (VYISSLALLK…IDAFRTINPQ (136 aa)) constitute an MPN domain. His-115, His-117, and Asp-128 together coordinate Zn(2+). The short motif at 115 to 128 (HSHPGFGCWLSGVD) is the JAMM motif element.

This sequence belongs to the peptidase M67A family. PSMD14 subfamily. As to quaternary structure, component of the 19S regulatory cap of the 26S proteasome.

Its function is as follows. Metalloprotease component of the 26S proteasome that specifically cleaves 'Lys-63'-linked polyubiquitin chains. The 26S proteasome is involved in the ATP-dependent degradation of ubiquitinated proteins. The function of the 'Lys-63'-specific deubiquitination of the proteasome is unclear. The protein is 26S proteasome non-ATPase regulatory subunit 14 (rpn-11) of Caenorhabditis elegans.